The primary structure comprises 308 residues: tRNA pseudouridine synthase B (308 aa).

The active-site Nucleophile is the Asp-37.

Belongs to the pseudouridine synthase TruB family. Type 1 subfamily.

The enzyme catalyses uridine(55) in tRNA = pseudouridine(55) in tRNA. Functionally, responsible for synthesis of pseudouridine from uracil-55 in the psi GC loop of transfer RNAs. The chain is tRNA pseudouridine synthase B from Deinococcus radiodurans (strain ATCC 13939 / DSM 20539 / JCM 16871 / CCUG 27074 / LMG 4051 / NBRC 15346 / NCIMB 9279 / VKM B-1422 / R1).